Reading from the N-terminus, the 667-residue chain is DNA ligase (667 aa).

Residues 32-36 (DSEYD), 81-82 (SL), and Glu110 each bind NAD(+). Lys112 acts as the N6-AMP-lysine intermediate in catalysis. Residues Arg133, Glu167, Lys283, and Lys307 each contribute to the NAD(+) site. Zn(2+)-binding residues include Cys401, Cys404, Cys419, and Cys424. Positions 586–667 (EGHPEFSGKT…FVDKQNELNS (82 aa)) constitute a BRCT domain.

This sequence belongs to the NAD-dependent DNA ligase family. LigA subfamily. The cofactor is Mg(2+). It depends on Mn(2+) as a cofactor.

It carries out the reaction NAD(+) + (deoxyribonucleotide)n-3'-hydroxyl + 5'-phospho-(deoxyribonucleotide)m = (deoxyribonucleotide)n+m + AMP + beta-nicotinamide D-nucleotide.. In terms of biological role, DNA ligase that catalyzes the formation of phosphodiester linkages between 5'-phosphoryl and 3'-hydroxyl groups in double-stranded DNA using NAD as a coenzyme and as the energy source for the reaction. It is essential for DNA replication and repair of damaged DNA. The polypeptide is DNA ligase (Staphylococcus aureus (strain Mu3 / ATCC 700698)).